The following is an 817-amino-acid chain: Exocyst complex component 6 (817 aa).

2 coiled-coil regions span residues 87 to 149 (QSFV…DQIA) and 247 to 270 (TDAERAKKIQEEARKNASNVEIEV).

This sequence belongs to the SEC15 family. In terms of assembly, the exocyst complex is composed of sec-3/exoc1, sec-5/exoc2, sec-6/exoc3, sec-8/exoc4, sec-10/exoc5, sec-15/exoc6, exo-70/exoc7 and exo-84/exoc8.

In terms of biological role, component of the exocyst complex involved in the docking of exocytic vesicles with fusion sites on the plasma membrane. The sequence is that of Exocyst complex component 6 (sec-15) from Caenorhabditis elegans.